Reading from the N-terminus, the 334-residue chain is D-fructose 1,6-bisphosphatase class 2/sedoheptulose 1,7-bisphosphatase (334 aa).

Residues D33, E57, D85, and E88 each contribute to the Mn(2+) site. Residues 88 to 90 (EGT), Y119, 164 to 166 (RAR), and 186 to 188 (DGD) each bind substrate. E213 contacts Mn(2+).

Belongs to the FBPase class 2 family. Homotetramer. Mn(2+) serves as cofactor.

The catalysed reaction is beta-D-fructose 1,6-bisphosphate + H2O = beta-D-fructose 6-phosphate + phosphate. It catalyses the reaction D-sedoheptulose 1,7-bisphosphate + H2O = D-sedoheptulose 7-phosphate + phosphate. It participates in carbohydrate biosynthesis; Calvin cycle. Functionally, catalyzes the hydrolysis of fructose 1,6-bisphosphate (Fru 1,6-P2) and sedoheptulose 1,7-bisphosphate (Sed 1,7-P2) to fructose 6-phosphate and sedoheptulose 7-phosphate, respectively. The chain is D-fructose 1,6-bisphosphatase class 2/sedoheptulose 1,7-bisphosphatase from Synechococcus sp. (strain CC9311).